Consider the following 136-residue polypeptide: Large ribosomal subunit protein uL16 (136 aa).

It belongs to the universal ribosomal protein uL16 family. In terms of assembly, part of the 50S ribosomal subunit.

Its function is as follows. Binds 23S rRNA and is also seen to make contacts with the A and possibly P site tRNAs. This is Large ribosomal subunit protein uL16 from Vibrio vulnificus (strain YJ016).